A 354-amino-acid chain; its full sequence is Uroporphyrinogen decarboxylase (354 aa).

Substrate is bound by residues 27 to 31, Asp-77, Tyr-154, Thr-209, and His-327; that span reads RQAGR.

The protein belongs to the uroporphyrinogen decarboxylase family. As to quaternary structure, homodimer.

The protein resides in the cytoplasm. The catalysed reaction is uroporphyrinogen III + 4 H(+) = coproporphyrinogen III + 4 CO2. It participates in porphyrin-containing compound metabolism; protoporphyrin-IX biosynthesis; coproporphyrinogen-III from 5-aminolevulinate: step 4/4. In terms of biological role, catalyzes the decarboxylation of four acetate groups of uroporphyrinogen-III to yield coproporphyrinogen-III. The chain is Uroporphyrinogen decarboxylase from Psychromonas ingrahamii (strain DSM 17664 / CCUG 51855 / 37).